The following is a 453-amino-acid chain: Mitochondrial import inner membrane translocase subunit TIM44 (453 aa).

Phosphothreonine is present on threonine 129. Position 167–174 (167–174) interacts with ATP; the sequence is GGEKLGKT. Lysine 178 is subject to N6-succinyllysine. Position 181 is a phosphoserine (serine 181). N6-succinyllysine is present on lysine 218.

Belongs to the Tim44 family. In terms of assembly, probable component of the PAM complex at least composed of a mitochondrial HSP70 protein, GRPEL1 or GRPEL2, TIMM44, TIMM16/PAM16 and TIMM14/DNAJC19. The complex interacts with the TIMM23 component of the TIM23 complex. Interacts with SLC25A4/ANT1 and SLC25A5/ANT2; leading to inhibit the presequence translocase TIMM23, thereby promoting stabilization of PINK1.

Its subcellular location is the mitochondrion inner membrane. The protein resides in the mitochondrion matrix. Its function is as follows. Essential component of the PAM complex, a complex required for the translocation of transit peptide-containing proteins from the inner membrane into the mitochondrial matrix in an ATP-dependent manner. Recruits mitochondrial HSP70 to drive protein translocation into the matrix using ATP as an energy source. This Rattus norvegicus (Rat) protein is Mitochondrial import inner membrane translocase subunit TIM44 (Timm44).